Consider the following 563-residue polypeptide: Urocanate hydratase (563 aa).

NAD(+)-binding positions include 53–54 (GG), glutamine 131, 177–179 (GMG), glutamate 197, arginine 202, 243–244 (NA), 264–268 (QTSAH), 274–275 (YL), and tyrosine 323. Cysteine 411 is an active-site residue. Glycine 493 contributes to the NAD(+) binding site.

It belongs to the urocanase family. Requires NAD(+) as cofactor.

It localises to the cytoplasm. The catalysed reaction is 4-imidazolone-5-propanoate = trans-urocanate + H2O. Its pathway is amino-acid degradation; L-histidine degradation into L-glutamate; N-formimidoyl-L-glutamate from L-histidine: step 2/3. Its function is as follows. Catalyzes the conversion of urocanate to 4-imidazolone-5-propionate. The protein is Urocanate hydratase of Yersinia pestis bv. Antiqua (strain Antiqua).